We begin with the raw amino-acid sequence, 343 residues long: Ribosomal RNA small subunit methyltransferase C (343 aa).

This sequence belongs to the methyltransferase superfamily. RsmC family. Monomer.

The protein localises to the cytoplasm. It carries out the reaction guanosine(1207) in 16S rRNA + S-adenosyl-L-methionine = N(2)-methylguanosine(1207) in 16S rRNA + S-adenosyl-L-homocysteine + H(+). Its function is as follows. Specifically methylates the guanine in position 1207 of 16S rRNA in the 30S particle. The chain is Ribosomal RNA small subunit methyltransferase C from Shewanella sediminis (strain HAW-EB3).